Reading from the N-terminus, the 331-residue chain is MLSAAVLGQPTRDNALWVTADSGKGQTRLLLDCGGHTLDTLPLHEVQATDHLLFSHLHMDHIAGFDDFFRVNFDRQSRENHLWGPPGAARILAHRLQGYWWNHAPQLRATWRIHEVDDAAVHTWRFELHEAFEIAHDEGRTPRTGPLIETPHLRVDAVPLQHQGPCLGYVLREPGRVNVDPAGLTRLDLTPGPWLAALKAGAEEVEIAGERRPAAPLRAELLREEAGDSLAYLTDFLLDEAELARLAPLLAGVRTLYLEAQYAPADADLAARNHHTTTEQGATLAARAGAQELVLLHLSRRYREADWREMLRAAQAIFPAARFAESWLRGT.

Zn(2+) contacts are provided by His-56, His-58, Asp-60, His-61, His-162, Asp-235, and His-297. Residue Asp-60 is the Proton acceptor of the active site.

This sequence belongs to the RNase Z family. In terms of assembly, homodimer. Requires Zn(2+) as cofactor.

The catalysed reaction is Endonucleolytic cleavage of RNA, removing extra 3' nucleotides from tRNA precursor, generating 3' termini of tRNAs. A 3'-hydroxy group is left at the tRNA terminus and a 5'-phosphoryl group is left at the trailer molecule.. Functionally, zinc phosphodiesterase, which displays some tRNA 3'-processing endonuclease activity. Probably involved in tRNA maturation, by removing a 3'-trailer from precursor tRNA. The sequence is that of Ribonuclease Z (rnz) from Deinococcus radiodurans (strain ATCC 13939 / DSM 20539 / JCM 16871 / CCUG 27074 / LMG 4051 / NBRC 15346 / NCIMB 9279 / VKM B-1422 / R1).